The following is a 166-amino-acid chain: Lymphocyte antigen 6G6e (166 aa).

The signal sequence occupies residues 1-18 (MGPSSAFLGVLFLSGTLG). The UPAR/Ly6 domain occupies 28–151 (LRCYTCSFAK…PPPNLPLMTL (124 aa)). Intrachain disulfides connect Cys-30/Cys-52, Cys-33/Cys-39, Cys-110/Cys-129, and Cys-130/Cys-135.

As to quaternary structure, interacts with CHRNA4. Post-translationally, O-glycosylated. Contains sialic acid residues.

The protein localises to the cell surface. It is found in the cell membrane. It localises to the cell projection. Its function is as follows. Believed to act as a modulator of nicotinic acetylcholine receptors (nAChRs) activity. In vitro potentiates alpha-3:beta-4-containing nAChRs maximum response by increasing peak current and slowing down receptor desensitization; the activity is dependent on its cell surface localization. This is Lymphocyte antigen 6G6e (Ly6g6e) from Mus musculus (Mouse).